A 356-amino-acid polypeptide reads, in one-letter code: tRNA-specific 2-thiouridylase MnmA (356 aa).

Residues 6-13 (GMSGGVDS) and Leu32 contribute to the ATP site. Cys102 serves as the catalytic Nucleophile. A disulfide bridge links Cys102 with Cys200. Gly127 serves as a coordination point for ATP. The tract at residues 150 to 152 (RDQ) is interaction with tRNA. The Cysteine persulfide intermediate role is filled by Cys200. The interval 302–303 (RY) is interaction with tRNA.

This sequence belongs to the MnmA/TRMU family.

It localises to the cytoplasm. The catalysed reaction is S-sulfanyl-L-cysteinyl-[protein] + uridine(34) in tRNA + AH2 + ATP = 2-thiouridine(34) in tRNA + L-cysteinyl-[protein] + A + AMP + diphosphate + H(+). Catalyzes the 2-thiolation of uridine at the wobble position (U34) of tRNA, leading to the formation of s(2)U34. The sequence is that of tRNA-specific 2-thiouridylase MnmA from Aquifex aeolicus (strain VF5).